The chain runs to 125 residues: Small ribosomal subunit protein uS12 (125 aa).

3-methylthioaspartic acid is present on D89.

This sequence belongs to the universal ribosomal protein uS12 family. In terms of assembly, part of the 30S ribosomal subunit. Contacts proteins S8 and S17. May interact with IF1 in the 30S initiation complex.

Functionally, with S4 and S5 plays an important role in translational accuracy. Its function is as follows. Interacts with and stabilizes bases of the 16S rRNA that are involved in tRNA selection in the A site and with the mRNA backbone. Located at the interface of the 30S and 50S subunits, it traverses the body of the 30S subunit contacting proteins on the other side and probably holding the rRNA structure together. The combined cluster of proteins S8, S12 and S17 appears to hold together the shoulder and platform of the 30S subunit. The protein is Small ribosomal subunit protein uS12 of Clostridium kluyveri (strain ATCC 8527 / DSM 555 / NBRC 12016 / NCIMB 10680 / K1).